Reading from the N-terminus, the 125-residue chain is Small ribosomal subunit protein bS6m (125 aa).

This sequence belongs to the bacterial ribosomal protein bS6 family. Component of the mitochondrial small ribosomal subunit (mt-SSU). Mature mammalian 55S mitochondrial ribosomes consist of a small (28S) and a large (39S) subunit. The 28S small subunit contains a 12S ribosomal RNA (12S mt-rRNA) and 30 different proteins. The 39S large subunit contains a 16S rRNA (16S mt-rRNA), a copy of mitochondrial valine transfer RNA (mt-tRNA(Val)), which plays an integral structural role, and 52 different proteins.

It is found in the mitochondrion. The polypeptide is Small ribosomal subunit protein bS6m (MRPS6) (Homo sapiens (Human)).